The chain runs to 233 residues: Large ribosomal subunit protein uL1 (233 aa).

This sequence belongs to the universal ribosomal protein uL1 family. Part of the 50S ribosomal subunit.

Functionally, binds directly to 23S rRNA. The L1 stalk is quite mobile in the ribosome, and is involved in E site tRNA release. In terms of biological role, protein L1 is also a translational repressor protein, it controls the translation of the L11 operon by binding to its mRNA. This Brucella canis (strain ATCC 23365 / NCTC 10854 / RM-666) protein is Large ribosomal subunit protein uL1.